The following is a 25-amino-acid chain: Spinigerin (25 aa).

The protein resides in the secreted. Functionally, active against Gram-positive bacteria B.megaterium and M.luteus, Gram-negative bacteria E.coli SBS363 and D22, K.pneumoniae, S.typhimurium and P.aeruginosa, yeast C.albicans and filamentous fungi F.culmorum, N.crassa, N.hematococca and T.viridae. Inactive against Gram-positive bacteria B.subtilis, S.pyogenes, B.thuringiensis and S.aureus, Gram-negative bacteria E.cloacae and E.carotovora and filamentous fungus B.bassiana. The chain is Spinigerin from Pseudacanthotermes spiniger.